A 310-amino-acid polypeptide reads, in one-letter code: Syndecan-1 (310 aa).

The first 22 residues, 1-22, serve as a signal peptide directing secretion; it reads MRRAALWLWLCALALSLQPALP. The Extracellular portion of the chain corresponds to 23–254; sequence QIVATNLPPE…GLLDRKEVLG (232 aa). 2 disordered regions span residues 27-100 and 114-212; these read TNLP…EGPK and LTAR…QDFT. Over residues 32–42 the composition is skewed to acidic residues; sequence EDQDGSGDDSD. O-linked (Xyl...) (chondroitin sulfate) serine glycosylation is present at S37. N-linked (GlcNAc...) asparagine glycosylation occurs at N43. 2 O-linked (Xyl...) (heparan sulfate) serine glycosylation sites follow: S45 and S47. Residues 55–75 are compositionally biased toward polar residues; it reads ITLSQQTPSTWKDTQLLTAIP. Basic and acidic residues predominate over residues 117–127; the sequence is REQEATPRPRE. Over residues 128–151 the composition is skewed to low complexity; sequence TTQLPTTHLASTTTATTAQEPATS. A compositionally biased stretch (basic and acidic residues) spans 153-164; that stretch reads PHRDMQPGHHET. Residues S206 and S216 are each glycosylated (O-linked (Xyl...) (chondroitin sulfate) serine). A helical transmembrane segment spans residues 255 to 275; that stretch reads GVIAGGLVGLIFAVCLVGFML. Over 276–310 the chain is Cytoplasmic; that stretch reads YRMKKKDEGSYSLEEPKQANGGAYQKPTKQEEFYA. Positions 284 to 310 are disordered; that stretch reads GSYSLEEPKQANGGAYQKPTKQEEFYA. Residue S285 is modified to Phosphoserine.

The protein belongs to the syndecan proteoglycan family. Interacts with CDCP1. Interacts (via C-terminus) with TIAM1 (via PDZ domain). Interacts with MDK. Shedding is enhanced by a number of factors such as heparanase, thrombin or EGF. Also by stress and wound healing. PMA-mediated shedding is inhibited by TIMP3. As to expression, detected in placenta (at protein level). Detected in fibroblasts (at protein level).

It is found in the membrane. It localises to the secreted. Its subcellular location is the extracellular exosome. Its function is as follows. Cell surface proteoglycan that contains both heparan sulfate and chondroitin sulfate and that links the cytoskeleton to the interstitial matrix. Regulates exosome biogenesis in concert with SDCBP and PDCD6IP. Able to induce its own expression in dental mesenchymal cells and also in the neighboring dental epithelial cells via an MSX1-mediated pathway. This chain is Syndecan-1, found in Homo sapiens (Human).